Here is a 303-residue protein sequence, read N- to C-terminus: Protoporphyrin uptake protein 1 (303 aa).

Over 1–18 (MSTTDSGFVLYHYTPSKA) the chain is Extracellular. Residues 19 to 39 (AAIVFVVLFIIMTVIFAVQTL) traverse the membrane as a helical segment. Topologically, residues 40–76 (YAARKSSKALKNNPFESSDDKVDSLEDAEYKQLKITP) are cytoplasmic. The helical transmembrane segment at 77-97 (TVFAFIPFFTGCIMEAVGYIG) threads the bilayer. Residues 98–111 (RALSSSNPERTTPY) are Extracellular-facing. A helical membrane pass occupies residues 112-132 (IIQSVLLLVAPALIAATIYMI). Topologically, residues 133-154 (FGRLLHVMRCQSLILISARFGT) are cytoplasmic. A helical membrane pass occupies residues 155 to 175 (TFFVVGDVFSFFLQAAGGGLM). The Extracellular portion of the chain corresponds to 176-183 (SKAGSTKT). A helical transmembrane segment spans residues 184-204 (GSGLITAGLFVQVIFFGFFII). Over 205–226 (NEIRFTVNVKRRCLFYEDISRK) the chain is Cytoplasmic. A helical membrane pass occupies residues 227 to 247 (WIFVNATLLLSSMLILLRSIV). At 248–264 (RIVEFIQGFNGYIISHE) the chain is on the extracellular side. A helical transmembrane segment spans residues 265–285 (YFIYVFDAVPMLLVIIAFSVG). Residues 286 to 303 (SFFGNVFDVIKECQTLSN) are Cytoplasmic-facing.

It belongs to the lipid-translocating exporter (LTE) (TC 9.A.26.1) family. In terms of processing, N-glycosylated.

The protein resides in the cell membrane. Involved in inducible protoporphyrin IX influx and heme efflux. The polypeptide is Protoporphyrin uptake protein 1 (PUG1) (Saccharomyces cerevisiae (strain ATCC 204508 / S288c) (Baker's yeast)).